A 251-amino-acid polypeptide reads, in one-letter code: Putative integrase/recombinase y4eF (251 aa).

A Core-binding (CB) domain is found at methionine 1–leucine 40. One can recognise a Tyr recombinase domain in the interval lysine 58–serine 231. Catalysis depends on residues arginine 93, lysine 118, histidine 183, arginine 186, and histidine 209. Tyrosine 218 acts as the O-(3'-phospho-DNA)-tyrosine intermediate in catalysis.

The protein belongs to the 'phage' integrase family.

This chain is Putative integrase/recombinase y4eF, found in Sinorhizobium fredii (strain NBRC 101917 / NGR234).